We begin with the raw amino-acid sequence, 239 residues long: Putative ABC transporter ATP-binding protein BR1368/BS1330_I1363 (239 aa).

One can recognise an ABC transporter domain in the interval 5 to 234 (LSLDRVSVSR…EQVHLHYVEA (230 aa)). 37-44 (GDNGVGKT) serves as a coordination point for ATP.

The protein belongs to the ABC transporter superfamily.

The protein resides in the cell inner membrane. Its function is as follows. Probably part of an ABC transporter complex. Responsible for energy coupling to the transport system. This Brucella suis biovar 1 (strain 1330) protein is Putative ABC transporter ATP-binding protein BR1368/BS1330_I1363.